Reading from the N-terminus, the 348-residue chain is Protein RecA (348 aa).

65–72 (GPESSGKT) provides a ligand contact to ATP.

It belongs to the RecA family.

It localises to the cytoplasm. Can catalyze the hydrolysis of ATP in the presence of single-stranded DNA, the ATP-dependent uptake of single-stranded DNA by duplex DNA, and the ATP-dependent hybridization of homologous single-stranded DNAs. It interacts with LexA causing its activation and leading to its autocatalytic cleavage. In Alteromonas mediterranea (strain DSM 17117 / CIP 110805 / LMG 28347 / Deep ecotype), this protein is Protein RecA.